The following is a 139-amino-acid chain: ATP synthase epsilon chain (139 aa).

Belongs to the ATPase epsilon chain family. As to quaternary structure, F-type ATPases have 2 components, CF(1) - the catalytic core - and CF(0) - the membrane proton channel. CF(1) has five subunits: alpha(3), beta(3), gamma(1), delta(1), epsilon(1). CF(0) has three main subunits: a, b and c.

Its subcellular location is the cell inner membrane. In terms of biological role, produces ATP from ADP in the presence of a proton gradient across the membrane. In Enterobacter sp. (strain 638), this protein is ATP synthase epsilon chain.